Reading from the N-terminus, the 432-residue chain is Mannose-6-phosphate isomerase 1 (432 aa).

Residue M1 is modified to N-acetylmethionine. Zn(2+) contacts are provided by Q124, H126, E151, and H288. Residue R307 is part of the active site.

The protein belongs to the mannose-6-phosphate isomerase type 1 family. It depends on Zn(2+) as a cofactor. As to expression, constitutively expressed in both vegetative and reproductive organs under normal growth conditions (at protein level).

It catalyses the reaction D-mannose 6-phosphate = D-fructose 6-phosphate. The protein operates within nucleotide-sugar biosynthesis; GDP-alpha-D-mannose biosynthesis; alpha-D-mannose 1-phosphate from D-fructose 6-phosphate: step 1/2. Inhibited by EDTA, Zn(2+), Cd(2+), Co(2+), p-chloromercuribenzoate and L-ascorbic acid (AsA). Phosphomannose isomerase involved in the synthesis of the GDP-mannose and dolichol-phosphate-mannose required for a number of critical mannosyl transfer reactions. Involved in the ascorbic acid (AsA) biosynthesis. Required during the endosperm development. The sequence is that of Mannose-6-phosphate isomerase 1 (PMI1) from Arabidopsis thaliana (Mouse-ear cress).